The sequence spans 111 residues: Large ribosomal subunit protein uL23 (111 aa).

Belongs to the universal ribosomal protein uL23 family. As to quaternary structure, part of the 50S ribosomal subunit. Contacts protein L29, and trigger factor when it is bound to the ribosome.

In terms of biological role, one of the early assembly proteins it binds 23S rRNA. One of the proteins that surrounds the polypeptide exit tunnel on the outside of the ribosome. Forms the main docking site for trigger factor binding to the ribosome. The chain is Large ribosomal subunit protein uL23 from Nitrosospira multiformis (strain ATCC 25196 / NCIMB 11849 / C 71).